Here is a 153-residue protein sequence, read N- to C-terminus: Ribosome maturation factor RimP (153 aa).

This sequence belongs to the RimP family.

The protein resides in the cytoplasm. Required for maturation of 30S ribosomal subunits. The sequence is that of Ribosome maturation factor RimP from Actinobacillus pleuropneumoniae serotype 5b (strain L20).